A 320-amino-acid chain; its full sequence is Ferrochelatase (320 aa).

Residues His194 and Glu275 each coordinate Fe cation.

This sequence belongs to the ferrochelatase family. As to quaternary structure, monomer.

It localises to the cytoplasm. The catalysed reaction is heme b + 2 H(+) = protoporphyrin IX + Fe(2+). It participates in porphyrin-containing compound metabolism; protoheme biosynthesis; protoheme from protoporphyrin-IX: step 1/1. Functionally, catalyzes the ferrous insertion into protoporphyrin IX. The chain is Ferrochelatase from Shigella flexneri serotype 5b (strain 8401).